The primary structure comprises 218 residues: Cytochrome b6 (218 aa).

Residues 35 to 55 traverse the membrane as a helical segment; sequence IFYCLGGITLVCFLIQFATGF. Cys38 is a heme c binding site. Residues His89 and His103 each contribute to the heme b site. 3 helical membrane-spanning segments follow: residues 93-113, 119-139, and 189-209; these read ASMM…TGGF, LTWV…VTGY, and LHTF…FLMI. Heme b contacts are provided by His190 and His205.

The protein belongs to the cytochrome b family. PetB subfamily. In terms of assembly, the 4 large subunits of the cytochrome b6-f complex are cytochrome b6, subunit IV (17 kDa polypeptide, PetD), cytochrome f and the Rieske protein, while the 4 small subunits are PetG, PetL, PetM and PetN. The complex functions as a dimer. Heme b is required as a cofactor. It depends on heme c as a cofactor.

Its subcellular location is the cellular thylakoid membrane. Component of the cytochrome b6-f complex, which mediates electron transfer between photosystem II (PSII) and photosystem I (PSI), cyclic electron flow around PSI, and state transitions. The sequence is that of Cytochrome b6 from Synechococcus sp. (strain WH7803).